Here is a 449-residue protein sequence, read N- to C-terminus: Chromosomal replication initiator protein DnaA (449 aa).

The segment at M1–L72 is domain I, interacts with DnaA modulators. The segment at L72 to T109 is domain II. The interval H110 to S326 is domain III, AAA+ region. Positions 154, 156, 157, and 158 each coordinate ATP. Residues T327 to G449 form a domain IV, binds dsDNA region.

It belongs to the DnaA family. In terms of assembly, oligomerizes as a right-handed, spiral filament on DNA at oriC.

It localises to the cytoplasm. Plays an essential role in the initiation and regulation of chromosomal replication. ATP-DnaA binds to the origin of replication (oriC) to initiate formation of the DNA replication initiation complex once per cell cycle. Binds the DnaA box (a 9 base pair repeat at the origin) and separates the double-stranded (ds)DNA. Forms a right-handed helical filament on oriC DNA; dsDNA binds to the exterior of the filament while single-stranded (ss)DNA is stabiized in the filament's interior. The ATP-DnaA-oriC complex binds and stabilizes one strand of the AT-rich DNA unwinding element (DUE), permitting loading of DNA polymerase. After initiation quickly degrades to an ADP-DnaA complex that is not apt for DNA replication. Binds acidic phospholipids. This Lacticaseibacillus casei (strain BL23) (Lactobacillus casei) protein is Chromosomal replication initiator protein DnaA.